Here is a 507-residue protein sequence, read N- to C-terminus: Maturase K (507 aa).

This sequence belongs to the intron maturase 2 family. MatK subfamily.

Its subcellular location is the plastid. The protein resides in the chloroplast. Its function is as follows. Usually encoded in the trnK tRNA gene intron. Probably assists in splicing its own and other chloroplast group II introns. This chain is Maturase K, found in Humulus lupulus (European hop).